The primary structure comprises 339 residues: Zinc transporter 3 (339 aa).

The first 25 residues, 1 to 25, serve as a signal peptide directing secretion; sequence MKTKNVKLLFFFFSVSLLLIAVVNA. Topologically, residues 26 to 54 are extracellular; it reads AEGHSHGGPKCECSHEDDHENKAGARKYK. The chain crosses the membrane as a helical span at residues 55–75; that stretch reads IAAIPTVLIAGIIGVLFPLLG. The Cytoplasmic portion of the chain corresponds to 76–86; the sequence is KVFPSLRPETC. Residues 87 to 107 form a helical membrane-spanning segment; sequence FFFVTKAFAAGVILATGFMHV. Over 108 to 123 the chain is Extracellular; that stretch reads LPEAYEMLNSPCLTSE. A helical membrane pass occupies residues 124-144; it reads AWEFPFTGFIAMIAAILTLSV. Residues 145–184 lie on the Cytoplasmic side of the membrane; it reads DTFATSSFYKSHCKASKRVSDGETGESSVDSEKVQILRTR. The chain crosses the membrane as a helical span at residues 185 to 205; that stretch reads VIAQVLELGIIVHSVVIGISL. Residues 206–216 lie on the Extracellular side of the membrane; sequence GASQSPDAAKA. A helical transmembrane segment spans residues 217-237; the sequence is LFIALMFHQCFEGLGLGGCIA. Residues 238–247 lie on the Cytoplasmic side of the membrane; it reads QGKFKCLSVT. Residues 248 to 268 form a helical membrane-spanning segment; the sequence is IMSTFFAITTPIGIVVGMGIA. The Extracellular segment spans residues 269–278; the sequence is NSYDESSPTA. The helical transmembrane segment at 279-299 threads the bilayer; sequence LIVQGVLNAASAGILIYMSLV. The Cytoplasmic portion of the chain corresponds to 300-315; that stretch reads DLLAADFTHPKMQSNT. A helical transmembrane segment spans residues 316-336; sequence GLQIMAHIALLLGAGLMSLLA. Residues 337 to 339 are Extracellular-facing; the sequence is KWA.

The protein belongs to the ZIP transporter (TC 2.A.5) family. As to expression, expressed predominantly in the roots of zinc-deficient plants.

The protein resides in the cell membrane. Its function is as follows. Mediates zinc uptake from the rhizosphere. May also transport other divalent cations. The polypeptide is Zinc transporter 3 (ZIP3) (Arabidopsis thaliana (Mouse-ear cress)).